The following is a 367-amino-acid chain: Protein RecA (367 aa).

73-80 (GPESSGKT) contributes to the ATP binding site.

It belongs to the RecA family.

The protein localises to the cytoplasm. In terms of biological role, can catalyze the hydrolysis of ATP in the presence of single-stranded DNA, the ATP-dependent uptake of single-stranded DNA by duplex DNA, and the ATP-dependent hybridization of homologous single-stranded DNAs. It interacts with LexA causing its activation and leading to its autocatalytic cleavage. The chain is Protein RecA from Delftia acidovorans (strain DSM 14801 / SPH-1).